The chain runs to 427 residues: Protein TIFY 6a (427 aa).

Residues 1–25 (MERDFLGAIGRKEEAAGKPEEHSDY) are compositionally biased toward basic and acidic residues. A disordered region spans residues 1–33 (MERDFLGAIGRKEEAAGKPEEHSDYRGGGGGAS). A Tify domain is found at 196-231 (QNPKVTQMTIFYDGLVNVFDNIPVEKAQELMLLASR). 2 stretches are compositionally biased toward polar residues: residues 293–303 (LPKSSSSSNDS) and 317–327 (PLSQASPSQPI). The disordered stretch occupies residues 293–327 (LPKSSSSSNDSAGPKSGGLPLAVTPLSQASPSQPI). Residues 343 to 367 (PQARKASLARFLEKRKERVSSVAPY) carry the Jas motif. The Nuclear localization signal signature appears at 345 to 352 (ARKASLAR). Positions 360 to 427 (RVSSVAPYPS…QEPPSTKLQI (68 aa)) are disordered. Polar residues-rich tracts occupy residues 369 to 402 (SSKS…NNCE) and 411 to 427 (RNIS…KLQI).

This sequence belongs to the TIFY/JAZ family. Post-translationally, ubiquitinated.

Its subcellular location is the nucleus. Functionally, repressor of jasmonate responses. In Oryza sativa subsp. indica (Rice), this protein is Protein TIFY 6a.